A 485-amino-acid chain; its full sequence is MMVMNPLTATFLAALIGTAASASCGSSGIPFRFEVLPSGQPVLGCGSPTCFGAENGGRDLRHDSSFMAGADGDDGFFRDGDLARVRVRDPDAPAQMANCPREFSSSSCSNPMTWVGGFKASDNGDLSLQCCHYEGLRFAQEVGRPVVHPGEVYSGGEVLRDGRQTGFDAISNVRKITSGDGTVAYEVTVTRMNCLPNPGEESNEVSFDIQRDIGRILDKVGETAASGVQTNHIEADQRLSPSTDVQSDSYVSPTEADPQEPVEQFVQVGEQVVPVTSAGYYYPVASGVPACFTGNSKVMTPAGEKSMADLSVGDMVMTYEYGKMTYTRVASWLHRLPDTKAAFIKLTTEQGAIIDMTPQHFIYKANCVTEEMELVYAEDMTIGDCLMVKENEKLVMTTISEKSTFYETGVYAPMTETGDLIVDDVYASCHNVVKANTLSHTFLNFATSVQQKMRSVLGSLEETGHLPATSEFFLNIIDVLLPHKY.

The signal sequence occupies residues methionine 1 to serine 21. Positions aspartate 236 to proline 258 are disordered. The span at leucine 239–serine 252 shows a compositional bias: polar residues.

Belongs to the hedgehog family. In terms of processing, the C-terminal domain displays an autoproteolysis activity.

Its subcellular location is the secreted. It localises to the cell surface. The protein localises to the cell membrane. The protein resides in the extracellular space. Intercellular signal essential for a variety of patterning events during development. The polypeptide is Warthog protein 1 (wrt-1) (Caenorhabditis elegans).